Here is a 288-residue protein sequence, read N- to C-terminus: HTH-type transcriptional repressor CarA (288 aa).

The region spanning 2-73 (TLRIRTIARM…VSEAIAQVKT (72 aa)) is the HTH merR-type domain. The segment at residues 5–24 (IRTIARMTGIREATLRAWER) is a DNA-binding region (H-T-H motif). In terms of domain architecture, B12-binding spans 162-288 (GPRALLACPS…NQVRNAQNRP (127 aa)).

The protein belongs to the CarA/CarH B12-binding photoregulator family. As to quaternary structure, forms homodimers or oligomers. Interacts with CarS.

With respect to regulation, binds cobalamin (vitamin B12), but cobalamin is not required for CarA activity. Interaction with CarS prevents binding to DNA. Negative regulator of the carB operon in the dark. Binds specifically to the CarA operator, in the region around the carB promoter, which blocks access to the RNA polymerase. In Myxococcus xanthus, this protein is HTH-type transcriptional repressor CarA (carA).